Consider the following 436-residue polypeptide: ABC transporter permease YtrF (436 aa).

The N-terminal stretch at 1 to 31 (MRFKDQVHFIRRNMKKNRLRVFMTILATTMA) is a signal peptide. Cys32 carries the N-palmitoyl cysteine lipid modification. Cys32 is lipidated: S-diacylglycerol cysteine. A coiled-coil region spans residues 115 to 165 (NMNDELKANMELEKGRVAKSENEIVVGYDFAKRLLTKKESEEYNKKIEEAK). 3 helical membrane passes run 293–313 (FKIGLIFVGCIAVIISAIGIF), 350–370 (YIGILGCVIGIIISYGVSYLV), and 396–416 (IPASLVIIAVVICGGVAVISG).

This sequence belongs to the ABC-4 integral membrane protein family. The complex is composed of 2 ATP-binding proteins (YtrB and YtrE), 2 transmembrane proteins (YtrC and YtrD) and a solute-binding protein (YtrF).

The protein localises to the cell membrane. Its function is as follows. Part of the ABC transporter complex YtrBCDEF that plays a role in acetoin utilization during stationary phase and sporulation. The sequence is that of ABC transporter permease YtrF (ytrF) from Bacillus subtilis (strain 168).